A 454-amino-acid chain; its full sequence is uncharacterized protein (454 aa).

The HNH domain occupies 364-405 (CSRPGCDAPAYHSEVHHVTPWTTTHRTDINDLTLACGPDNRL). Positions 415 to 434 (NAKGDTEWLPPAHLDHGQPR) are disordered.

This sequence belongs to the Rv1128c/1148c/1588c/1702c/1945/3466 family.

This is an uncharacterized protein from Mycobacterium tuberculosis (strain CDC 1551 / Oshkosh).